The primary structure comprises 318 residues: HPr kinase/phosphorylase (318 aa).

Active-site residues include His-146 and Lys-167. Residue 161–168 (GESGLGKS) participates in ATP binding. Ser-168 serves as a coordination point for Mg(2+). Asp-185 functions as the Proton acceptor; for phosphorylation activity. Proton donor; for dephosphorylation activity in the catalytic mechanism. The interval 209-218 (LEVRGIGLLD) is important for the catalytic mechanism of both phosphorylation and dephosphorylation. Glu-210 is a Mg(2+) binding site. Residue Arg-252 is part of the active site. Positions 273–278 (QVVAGR) are important for the catalytic mechanism of dephosphorylation.

This sequence belongs to the HPrK/P family. Homohexamer. Mg(2+) is required as a cofactor.

It carries out the reaction [HPr protein]-L-serine + ATP = [HPr protein]-O-phospho-L-serine + ADP + H(+). It catalyses the reaction [HPr protein]-O-phospho-L-serine + phosphate + H(+) = [HPr protein]-L-serine + diphosphate. Catalyzes the ATP- as well as the pyrophosphate-dependent phosphorylation of a specific serine residue in HPr, a phosphocarrier protein of the phosphoenolpyruvate-dependent sugar phosphotransferase system (PTS). HprK/P also catalyzes the pyrophosphate-producing, inorganic phosphate-dependent dephosphorylation (phosphorolysis) of seryl-phosphorylated HPr (P-Ser-HPr). This is HPr kinase/phosphorylase from Acidovorax sp. (strain JS42).